The chain runs to 391 residues: NADH-quinone oxidoreductase subunit D (391 aa).

Belongs to the complex I 49 kDa subunit family. In terms of assembly, NDH-1 is composed of 14 different subunits. Subunits NuoB, C, D, E, F, and G constitute the peripheral sector of the complex.

The protein resides in the cell inner membrane. It catalyses the reaction a quinone + NADH + 5 H(+)(in) = a quinol + NAD(+) + 4 H(+)(out). Its function is as follows. NDH-1 shuttles electrons from NADH, via FMN and iron-sulfur (Fe-S) centers, to quinones in the respiratory chain. The immediate electron acceptor for the enzyme in this species is believed to be ubiquinone. Couples the redox reaction to proton translocation (for every two electrons transferred, four hydrogen ions are translocated across the cytoplasmic membrane), and thus conserves the redox energy in a proton gradient. The chain is NADH-quinone oxidoreductase subunit D from Rickettsia akari (strain Hartford).